Reading from the N-terminus, the 198-residue chain is Na(+)-translocating NADH-quinone reductase subunit E (198 aa).

Helical transmembrane passes span 11–31 (AVFVENMALAFFLGMCTFLAV), 35–55 (VSTAFGLGIAVTLVLGISVPV), 77–97 (FLNFITFIGVIAALVQILEMI), 110–130 (GIFLPLITVNCAIFGGVSFMV), 140–160 (VVYGFGSGTGWMLAIVAMAGI), and 176–196 (LGITFITTGLMALGFMSFSGV).

This sequence belongs to the NqrDE/RnfAE family. As to quaternary structure, composed of six subunits; NqrA, NqrB, NqrC, NqrD, NqrE and NqrF.

The protein resides in the cell inner membrane. The enzyme catalyses a ubiquinone + n Na(+)(in) + NADH + H(+) = a ubiquinol + n Na(+)(out) + NAD(+). In terms of biological role, NQR complex catalyzes the reduction of ubiquinone-1 to ubiquinol by two successive reactions, coupled with the transport of Na(+) ions from the cytoplasm to the periplasm. NqrA to NqrE are probably involved in the second step, the conversion of ubisemiquinone to ubiquinol. In Serratia proteamaculans (strain 568), this protein is Na(+)-translocating NADH-quinone reductase subunit E.